A 154-amino-acid chain; its full sequence is Ascorbate-specific PTS system EIIA component (154 aa).

The region spanning 6–150 (SLAENKSIRL…QEVLDLIDRT (145 aa)) is the PTS EIIA type-2 domain. His-68 serves as the catalytic Tele-phosphohistidine intermediate. At His-68 the chain carries Phosphohistidine.

It localises to the cytoplasm. In terms of biological role, the phosphoenolpyruvate-dependent sugar phosphotransferase system (sugar PTS), a major carbohydrate active transport system, catalyzes the phosphorylation of incoming sugar substrates concomitantly with their translocation across the cell membrane. The enzyme II UlaABC PTS system is involved in ascorbate transport. The protein is Ascorbate-specific PTS system EIIA component (ulaC) of Shigella boydii serotype 4 (strain Sb227).